Consider the following 750-residue polypeptide: Polyribonucleotide nucleotidyltransferase (750 aa).

Residues aspartate 489 and aspartate 495 each coordinate Mg(2+). Residues 556–620 (PKMITRRIPN…EGIDKVIAKI (65 aa)) enclose the KH domain. The 72-residue stretch at 630–701 (GSVYEVKVIK…KTRKDKVSRK (72 aa)) folds into the S1 motif domain. Residues 697–750 (KVSRKALMEKPEGYKERAPRDRDDKRGSRDNNRGRDNRGRDNRRDDRKPRENKD) are disordered. Positions 702–750 (ALMEKPEGYKERAPRDRDDKRGSRDNNRGRDNRGRDNRRDDRKPRENKD) are enriched in basic and acidic residues.

It belongs to the polyribonucleotide nucleotidyltransferase family. The cofactor is Mg(2+).

It is found in the cytoplasm. It catalyses the reaction RNA(n+1) + phosphate = RNA(n) + a ribonucleoside 5'-diphosphate. Its function is as follows. Involved in mRNA degradation. Catalyzes the phosphorolysis of single-stranded polyribonucleotides processively in the 3'- to 5'-direction. The sequence is that of Polyribonucleotide nucleotidyltransferase from Christiangramia forsetii (strain DSM 17595 / CGMCC 1.15422 / KT0803) (Gramella forsetii).